Consider the following 572-residue polypeptide: MALIIPRSQYVATYGPTVGDKVRLGDTDLWATIEQDFLTKGDECKFGGGKSVRDGMAQSSTATRDNPNVLDFALTNVMIIDAKLGIIKADIGIRDGRIVGIGQAGNPDTMDNVTPNMIIGASTEVHNGAHLIATAGGIDTHIHWICPQQAQHAIENGITTMIGGGSGPADGTHATTCTPGKFNIERMFQACEALPVNIGFFGKGNCSMLEPLKEQVVAGALGLKIHEDWGATPAVIDAALKVADEMDVQVAIHTDTLNESGFLEDTMKAINGRVIHTFHTEGAGGGHAPDIIKAAMYPNVLPASTNPTRPFTVNTIDEHLDMLMVCHHLDKRVPEDVAFADSRIRPETIAAEDILHDMGVFSIMSSDSQAMGRVGEVVTRTWQTADKMKAQRGALGDEGNDNFRIKRYIAKYTINPAIAHGISQYVGSLEVGKLADIVLWKPQFFGVKPEFVMKKGFISFAKMGDPNASIPTPQPVFYRPMFGANAKANTESAVYFVSQASVDANIKAQYGIQKETLAVKGCRDVGKKDLVHNNATPEITVDPERYEVRVDGEHITCEPATKVPLAQRYFLF.

The region spanning 136-572 (GGIDTHIHWI…VPLAQRYFLF (437 aa)) is the Urease domain. 3 residues coordinate Ni(2+): H141, H143, and K224. K224 is modified (N6-carboxylysine). Position 226 (H226) interacts with substrate. 2 residues coordinate Ni(2+): H253 and H279. H327 functions as the Proton donor in the catalytic mechanism. D367 contacts Ni(2+).

Belongs to the metallo-dependent hydrolases superfamily. Urease alpha subunit family. Heterotrimer of UreA (gamma), UreB (beta) and UreC (alpha) subunits. Three heterotrimers associate to form the active enzyme. The cofactor is Ni cation. In terms of processing, carboxylation allows a single lysine to coordinate two nickel ions.

It is found in the cytoplasm. It carries out the reaction urea + 2 H2O + H(+) = hydrogencarbonate + 2 NH4(+). It participates in nitrogen metabolism; urea degradation; CO(2) and NH(3) from urea (urease route): step 1/1. In Actinobacillus pleuropneumoniae serotype 3 (strain JL03), this protein is Urease subunit alpha.